Consider the following 68-residue polypeptide: MHLCQNGHYYKPHRASAEKVPYLKKKKKNSRNEGKAKKKNEKKKIGTVEFFQQKKKEKKRVLNAVCGL.

The segment at 1-42 (MHLCQNGHYYKPHRASAEKVPYLKKKKKNSRNEGKAKKKNEK) is disordered.

This is an uncharacterized protein from Saccharomyces cerevisiae (strain ATCC 204508 / S288c) (Baker's yeast).